Reading from the N-terminus, the 436-residue chain is Serine--tRNA ligase (436 aa).

A compositionally biased stretch (basic and acidic residues) spans 43-55 (TKSEQLKQKRNEV). The disordered stretch occupies residues 43 to 68 (TKSEQLKQKRNEVSDQIAQAKRNKED). An L-serine-binding site is contributed by 237–239 (TAE). Residue 268–270 (RSE) coordinates ATP. Glu291 serves as a coordination point for L-serine. 355-358 (EISS) is a binding site for ATP. Ser390 contacts L-serine.

This sequence belongs to the class-II aminoacyl-tRNA synthetase family. Type-1 seryl-tRNA synthetase subfamily. Homodimer. The tRNA molecule binds across the dimer.

The protein localises to the cytoplasm. The enzyme catalyses tRNA(Ser) + L-serine + ATP = L-seryl-tRNA(Ser) + AMP + diphosphate + H(+). It catalyses the reaction tRNA(Sec) + L-serine + ATP = L-seryl-tRNA(Sec) + AMP + diphosphate + H(+). It functions in the pathway aminoacyl-tRNA biosynthesis; selenocysteinyl-tRNA(Sec) biosynthesis; L-seryl-tRNA(Sec) from L-serine and tRNA(Sec): step 1/1. Its function is as follows. Catalyzes the attachment of serine to tRNA(Ser). Is also able to aminoacylate tRNA(Sec) with serine, to form the misacylated tRNA L-seryl-tRNA(Sec), which will be further converted into selenocysteinyl-tRNA(Sec). This Lactobacillus johnsonii (strain CNCM I-12250 / La1 / NCC 533) protein is Serine--tRNA ligase.